The primary structure comprises 378 residues: Deoxyguanosinetriphosphate triphosphohydrolase-like protein (378 aa).

Residues 1–28 are disordered; that stretch reads MLAPFACQPGESRGRQKPESMSTFRSPF. Positions 62 to 198 constitute an HD domain; the sequence is RLTHSIEVAQ…AAIADDVAYS (137 aa).

It belongs to the dGTPase family. Type 2 subfamily.

This Cereibacter sphaeroides (strain ATCC 17029 / ATH 2.4.9) (Rhodobacter sphaeroides) protein is Deoxyguanosinetriphosphate triphosphohydrolase-like protein.